A 189-amino-acid polypeptide reads, in one-letter code: ATP synthase subunit b (189 aa).

A helical transmembrane segment spans residues 25-45 (LPVWPEVVIGLICFGIVFFVF).

This sequence belongs to the ATPase B chain family. In terms of assembly, F-type ATPases have 2 components, F(1) - the catalytic core - and F(0) - the membrane proton channel. F(1) has five subunits: alpha(3), beta(3), gamma(1), delta(1), epsilon(1). F(0) has three main subunits: a(1), b(2) and c(10-14). The alpha and beta chains form an alternating ring which encloses part of the gamma chain. F(1) is attached to F(0) by a central stalk formed by the gamma and epsilon chains, while a peripheral stalk is formed by the delta and b chains.

Its subcellular location is the cell membrane. F(1)F(0) ATP synthase produces ATP from ADP in the presence of a proton or sodium gradient. F-type ATPases consist of two structural domains, F(1) containing the extramembraneous catalytic core and F(0) containing the membrane proton channel, linked together by a central stalk and a peripheral stalk. During catalysis, ATP synthesis in the catalytic domain of F(1) is coupled via a rotary mechanism of the central stalk subunits to proton translocation. Functionally, component of the F(0) channel, it forms part of the peripheral stalk, linking F(1) to F(0). The polypeptide is ATP synthase subunit b (Streptomyces griseus subsp. griseus (strain JCM 4626 / CBS 651.72 / NBRC 13350 / KCC S-0626 / ISP 5235)).